We begin with the raw amino-acid sequence, 742 residues long: Potassium transporter 19 (742 aa).

The Cytoplasmic portion of the chain corresponds to M1–Q46. A helical transmembrane segment spans residues L47–Y67. The Extracellular segment spans residues S68–G83. The chain crosses the membrane as a helical span at residues V84–V104. The Cytoplasmic portion of the chain corresponds to L105–K170. The helical transmembrane segment at I171–T191 threads the bilayer. Residues P192 to K206 are Extracellular-facing. Residues A207 to F227 traverse the membrane as a helical segment. Topologically, residues S228–K236 are cytoplasmic. The helical transmembrane segment at V237–M257 threads the bilayer. The Extracellular portion of the chain corresponds to Y258–A287. N259 carries N-linked (GlcNAc...) asparagine glycosylation. A helical membrane pass occupies residues W288 to L308. Over G309 to Q317 the chain is Cytoplasmic. The helical transmembrane segment at L318–Y338 threads the bilayer. At L339–R352 the chain is on the extracellular side. A helical transmembrane segment spans residues S353–A373. Residues S374–Q409 are Cytoplasmic-facing. A helical transmembrane segment spans residues V410–F430. Topologically, residues Q431–G441 are extracellular. The helical transmembrane segment at I442 to I462 threads the bilayer. Residues W463–P468 lie on the Cytoplasmic side of the membrane. A helical transmembrane segment spans residues F469–L489. Over S490–G495 the chain is Extracellular. The helical transmembrane segment at G496 to V516 threads the bilayer. The Cytoplasmic segment spans residues H517 to I742.

The protein belongs to the HAK/KUP transporter (TC 2.A.72.3) family.

It localises to the membrane. High-affinity potassium transporter. This is Potassium transporter 19 (HAK19) from Oryza sativa subsp. japonica (Rice).